We begin with the raw amino-acid sequence, 387 residues long: MRNAALLMTRATSLRLSLLLLLSFLPDLDGGVRAKELRFVTLVFRHGDRSPIETFPNDPIKESSWPQGFGQLTQLGMAQHYELGQYIRKRYENFLNESYKREQVHVRSTDIDRTLMSAMTNLAALFPPEGISIWNPSLPWQPIPVHTVPVSEDQLLYLPFRNCPRFQELQSETLISEEFQKRLQPYKDFIEVLPKLTGYHDQDLLGIWSKVYDPLFCEGVHNFTLPSWATEDTMTKLKEISELSLLSLYGIHKQKEKSRLQGGVLINEILNHMKSATQPSNRRKLIMYSAHDTTVSGLQMALDVYNGILPPYASCHMMELYFQDGEYFVEMYYRNETRYEPHPLTLPGCTPSCPLAKFVELVAPVISQDWSMECAIRNHKGTEDIIN.

Positions 1 to 34 are cleaved as a signal peptide; sequence MRNAALLMTRATSLRLSLLLLLSFLPDLDGGVRA. Arg-45 is a substrate binding site. His-46 acts as the Nucleophile in catalysis. Arg-49 provides a ligand contact to substrate. Asn-96 carries an N-linked (GlcNAc...) asparagine glycan. A substrate-binding site is contributed by Arg-113. Disulfide bonds link Cys-163/Cys-374, Cys-217/Cys-315, and Cys-349/Cys-353. The N-linked (GlcNAc...) asparagine glycan is linked to Asn-222. Substrate is bound at residue His-291. Asp-292 (proton donor) is an active-site residue. A glycan (N-linked (GlcNAc...) asparagine) is linked at Asn-335.

It belongs to the histidine acid phosphatase family. In terms of assembly, homodimer; dimer formation is required for phosphatase activity.

The protein localises to the secreted. It catalyses the reaction a phosphate monoester + H2O = an alcohol + phosphate. The catalysed reaction is 1-(9Z-octadecenoyl)-sn-glycero-3-phosphate + H2O = 1-(9Z-octadecenoyl)-sn-glycerol + phosphate. It carries out the reaction O-phospho-L-tyrosyl-[protein] + H2O = L-tyrosyl-[protein] + phosphate. In terms of biological role, a non-specific tyrosine phosphatase that dephosphorylates a diverse number of substrates under acidic conditions (pH 4-6) including alkyl, aryl, and acyl orthophosphate monoesters and phosphorylated proteins. Has lipid phosphatase activity and inactivates lysophosphatidic acid in seminal plasma. The chain is Prostatic acid phosphatase (ACP3) from Bos taurus (Bovine).